Here is a 239-residue protein sequence, read N- to C-terminus: Purine nucleoside phosphorylase DeoD-type (239 aa).

His-5 provides a ligand contact to a purine D-ribonucleoside. Phosphate is bound by residues Gly-21, Arg-25, Arg-44, and 88-91 (RVGS). A purine D-ribonucleoside contacts are provided by residues 180 to 182 (EME) and 204 to 205 (SD). Asp-205 (proton donor) is an active-site residue.

It belongs to the PNP/UDP phosphorylase family. Homohexamer; trimer of homodimers.

The catalysed reaction is a purine D-ribonucleoside + phosphate = a purine nucleobase + alpha-D-ribose 1-phosphate. It catalyses the reaction a purine 2'-deoxy-D-ribonucleoside + phosphate = a purine nucleobase + 2-deoxy-alpha-D-ribose 1-phosphate. In terms of biological role, catalyzes the reversible phosphorolytic breakdown of the N-glycosidic bond in the beta-(deoxy)ribonucleoside molecules, with the formation of the corresponding free purine bases and pentose-1-phosphate. This chain is Purine nucleoside phosphorylase DeoD-type, found in Yersinia pseudotuberculosis serotype O:1b (strain IP 31758).